Reading from the N-terminus, the 404-residue chain is Probable tRNA sulfurtransferase (404 aa).

The THUMP domain maps to 60 to 165; that stretch reads TAVAESLKQV…EEAAYLSYET (106 aa). ATP-binding positions include 183-184, 208-209, Arg265, Gly287, and Gln296; these read ML and HF.

This sequence belongs to the ThiI family.

It localises to the cytoplasm. It catalyses the reaction [ThiI sulfur-carrier protein]-S-sulfanyl-L-cysteine + a uridine in tRNA + 2 reduced [2Fe-2S]-[ferredoxin] + ATP + H(+) = [ThiI sulfur-carrier protein]-L-cysteine + a 4-thiouridine in tRNA + 2 oxidized [2Fe-2S]-[ferredoxin] + AMP + diphosphate. The catalysed reaction is [ThiS sulfur-carrier protein]-C-terminal Gly-Gly-AMP + S-sulfanyl-L-cysteinyl-[cysteine desulfurase] + AH2 = [ThiS sulfur-carrier protein]-C-terminal-Gly-aminoethanethioate + L-cysteinyl-[cysteine desulfurase] + A + AMP + 2 H(+). It participates in cofactor biosynthesis; thiamine diphosphate biosynthesis. Functionally, catalyzes the ATP-dependent transfer of a sulfur to tRNA to produce 4-thiouridine in position 8 of tRNAs, which functions as a near-UV photosensor. Also catalyzes the transfer of sulfur to the sulfur carrier protein ThiS, forming ThiS-thiocarboxylate. This is a step in the synthesis of thiazole, in the thiamine biosynthesis pathway. The sulfur is donated as persulfide by IscS. This Streptococcus pneumoniae (strain ATCC 700669 / Spain 23F-1) protein is Probable tRNA sulfurtransferase.